Reading from the N-terminus, the 316-residue chain is Transaldolase 2 (316 aa).

Lys-131 functions as the Schiff-base intermediate with substrate in the catalytic mechanism.

It belongs to the transaldolase family. Type 1 subfamily. In terms of assembly, homodimer.

The protein localises to the cytoplasm. It carries out the reaction D-sedoheptulose 7-phosphate + D-glyceraldehyde 3-phosphate = D-erythrose 4-phosphate + beta-D-fructose 6-phosphate. Its pathway is carbohydrate degradation; pentose phosphate pathway; D-glyceraldehyde 3-phosphate and beta-D-fructose 6-phosphate from D-ribose 5-phosphate and D-xylulose 5-phosphate (non-oxidative stage): step 2/3. In terms of biological role, transaldolase is important for the balance of metabolites in the pentose-phosphate pathway. In Salmonella choleraesuis (strain SC-B67), this protein is Transaldolase 2.